The chain runs to 444 residues: UDP-N-acetylmuramate--L-alanine ligase (444 aa).

110 to 116 (GAHGKTS) provides a ligand contact to ATP.

It belongs to the MurCDEF family.

It localises to the cytoplasm. It catalyses the reaction UDP-N-acetyl-alpha-D-muramate + L-alanine + ATP = UDP-N-acetyl-alpha-D-muramoyl-L-alanine + ADP + phosphate + H(+). It participates in cell wall biogenesis; peptidoglycan biosynthesis. In terms of biological role, cell wall formation. The protein is UDP-N-acetylmuramate--L-alanine ligase of Streptococcus pneumoniae (strain ATCC 700669 / Spain 23F-1).